The sequence spans 205 residues: Rho GDP-dissociation inhibitor (205 aa).

Positions 1–11 (MSVNNEVSADQ) are enriched in polar residues. The tract at residues 1 to 31 (MSVNNEVSADQHNPELEDDTFEHGPPVSLGE) is disordered. Ser-63 carries the phosphoserine modification.

It belongs to the Rho GDI family.

The protein resides in the cytoplasm. It is found in the nucleus. In terms of biological role, regulates the GDP/GTP exchange reaction of the Rho proteins by inhibiting the dissociation of GDP from them, and the subsequent binding of GTP to them. The polypeptide is Rho GDP-dissociation inhibitor (Schizosaccharomyces pombe (strain 972 / ATCC 24843) (Fission yeast)).